Consider the following 147-residue polypeptide: Lysozyme C-1 (147 aa).

An N-terminal signal peptide occupies residues Met-1 to Gly-18. The C-type lysozyme domain maps to Lys-19 to Leu-147. 4 disulfides stabilise this stretch: Cys-24/Cys-145, Cys-48/Cys-133, Cys-83/Cys-99, and Cys-95/Cys-113. Catalysis depends on residues Glu-53 and Asp-71.

Belongs to the glycosyl hydrolase 22 family. In terms of assembly, monomer. As to expression, expressed in stomach.

Its subcellular location is the secreted. It carries out the reaction Hydrolysis of (1-&gt;4)-beta-linkages between N-acetylmuramic acid and N-acetyl-D-glucosamine residues in a peptidoglycan and between N-acetyl-D-glucosamine residues in chitodextrins.. In terms of biological role, lysozymes have primarily a bacteriolytic function; those in tissues and body fluids are associated with the monocyte-macrophage system and enhance the activity of immunoagents. The protein is Lysozyme C-1 of Ovis aries (Sheep).